A 514-amino-acid polypeptide reads, in one-letter code: Cobyric acid synthase (514 aa).

Residues 263–457 (ALDVAVIRLP…LHGIFDNDPL (195 aa)) form the GATase cobBQ-type domain. Catalysis depends on Cys-344, which acts as the Nucleophile. The active site involves His-449.

It belongs to the CobB/CobQ family. CobQ subfamily.

It functions in the pathway cofactor biosynthesis; adenosylcobalamin biosynthesis. Its function is as follows. Catalyzes amidations at positions B, D, E, and G on adenosylcobyrinic A,C-diamide. NH(2) groups are provided by glutamine, and one molecule of ATP is hydrogenolyzed for each amidation. The sequence is that of Cobyric acid synthase from Desulfitobacterium hafniense (strain DSM 10664 / DCB-2).